A 678-amino-acid polypeptide reads, in one-letter code: Protein CASP (678 aa).

The Cytoplasmic portion of the chain corresponds to 1–619 (MAANVGSMFQ…LVLSNKMART (619 aa)). Coiled coils occupy residues 67-450 (LLKS…QDLS) and 502-556 (LSII…FLQS). The residue at position 586 (Ser-586) is a Phosphoserine. A helical; Anchor for type IV membrane protein transmembrane segment spans residues 620–640 (IGFFYTLFLHCLVFLVLYKLA). Residues 641-678 (WSESMERDCATFCAKKFADHLHKFHENDNGAAAGDLWQ) lie on the Lumenal side of the membrane.

It belongs to the CASP family. As to quaternary structure, homodimer; disulfide-linked. Interacts with GOLGA5.

It is found in the golgi apparatus membrane. Its function is as follows. May be involved in intra-Golgi retrograde transport. The sequence is that of Protein CASP (CUX1) from Homo sapiens (Human).